We begin with the raw amino-acid sequence, 229 residues long: Small ribosomal subunit protein uS2c (229 aa).

This sequence belongs to the universal ribosomal protein uS2 family.

Its subcellular location is the plastid. It localises to the chloroplast. The protein is Small ribosomal subunit protein uS2c (rps2) of Emiliania huxleyi (Coccolithophore).